The following is a 511-amino-acid chain: Alpha-amylase 2B (511 aa).

An N-terminal signal peptide occupies residues 1 to 15; it reads MKFFLLLFTIGFCWA. Position 16 is a pyrrolidone carboxylic acid (Q16). 3 cysteine pairs are disulfide-bonded: C43/C101, C85/C130, and C156/C175. N115, R173, and D182 together coordinate Ca(2+). R210 provides a ligand contact to chloride. The Nucleophile role is filled by D212. H216 is a Ca(2+) binding site. The active-site Proton donor is E248. Chloride-binding residues include N313 and R352. 2 disulfides stabilise this stretch: C393-C399 and C465-C477.

Belongs to the glycosyl hydrolase 13 family. As to quaternary structure, monomer. The cofactor is Ca(2+). Requires chloride as cofactor.

Its subcellular location is the secreted. It catalyses the reaction Endohydrolysis of (1-&gt;4)-alpha-D-glucosidic linkages in polysaccharides containing three or more (1-&gt;4)-alpha-linked D-glucose units.. The chain is Alpha-amylase 2B (AMY2B) from Homo sapiens (Human).